The chain runs to 432 residues: Short/branched chain specific acyl-CoA dehydrogenase, mitochondrial (432 aa).

The transit peptide at 1–33 (MAVSAFQLWRAGGLLRRNFLTHSSSWKIPPRVL) directs the protein to the mitochondrion. Position 70 is an N6-acetyllysine; alternate (Lys70). Lys70 is modified (N6-succinyllysine; alternate). FAD-binding positions include 174–183 (FCLSEAGAGS) and 207–209 (WIS). Residue Ser183 coordinates substrate. Position 183 is a phosphoserine (Ser183). Tyr229 is a substrate binding site. Lys278 carries the N6-succinyllysine modification. Position 283 (Tyr283) interacts with substrate. Lys284 carries the post-translational modification N6-acetyllysine; alternate. Lys284 carries the post-translational modification N6-succinyllysine; alternate. 291–294 (NEGR) serves as a coordination point for substrate. FAD is bound by residues Arg319, Gln330, and 387 to 391 (EWMGG). Residue Glu414 is the Proton acceptor of the active site. FAD is bound at residue 416-418 (TSN). Residue Lys426 is modified to N6-acetyllysine.

This sequence belongs to the acyl-CoA dehydrogenase family. In terms of assembly, homotetramer. FAD serves as cofactor. In terms of tissue distribution, ubiquitously expressed.

It is found in the mitochondrion matrix. It carries out the reaction 2-methylbutanoyl-CoA + oxidized [electron-transfer flavoprotein] + H(+) = (2E)-2-methylbut-2-enoyl-CoA + reduced [electron-transfer flavoprotein]. The catalysed reaction is (2S)-2-methylbutanoyl-CoA + oxidized [electron-transfer flavoprotein] + H(+) = (2E)-2-methylbut-2-enoyl-CoA + reduced [electron-transfer flavoprotein]. It catalyses the reaction (2R)-2-methylbutanoyl-CoA + oxidized [electron-transfer flavoprotein] + H(+) = ethylacryloyl-CoA + reduced [electron-transfer flavoprotein]. The enzyme catalyses butanoyl-CoA + oxidized [electron-transfer flavoprotein] + H(+) = (2E)-butenoyl-CoA + reduced [electron-transfer flavoprotein]. It carries out the reaction 2-methylpropanoyl-CoA + oxidized [electron-transfer flavoprotein] + H(+) = 2-methylpropenoyl-CoA + reduced [electron-transfer flavoprotein]. The catalysed reaction is hexanoyl-CoA + oxidized [electron-transfer flavoprotein] + H(+) = (2E)-hexenoyl-CoA + reduced [electron-transfer flavoprotein]. It catalyses the reaction valproyl-CoA + oxidized [electron-transfer flavoprotein] + H(+) = (2E)-2-propylpent-2-enoyl-CoA + reduced [electron-transfer flavoprotein]. It participates in lipid metabolism; mitochondrial fatty acid beta-oxidation. It functions in the pathway amino-acid degradation; L-isoleucine degradation. With respect to regulation, inhibited by N-ethylmaleimide, hydroxymercuribenzoate, methyl mercury iodide and heavy metals such as Hg2+, Cu2+, and Ag2+. Its function is as follows. Short and branched chain specific acyl-CoA dehydrogenase that catalyzes the removal of one hydrogen from C-2 and C-3 of the fatty acyl-CoA thioester, resulting in the formation of trans-2-enoyl-CoA. Among the different mitochondrial acyl-CoA dehydrogenases, acts specifically on short and branched chain acyl-CoA derivatives such as (S)-2-methylbutyryl-CoA as well as short straight chain acyl-CoAs such as butyryl-CoA. Plays an important role in the metabolism of L-isoleucine by catalyzing the dehydrogenation of 2-methylbutyryl-CoA, one of the steps of the L-isoleucine catabolic pathway. Can also act on valproyl-CoA, a metabolite of the valproic acid drug. This is Short/branched chain specific acyl-CoA dehydrogenase, mitochondrial from Rattus norvegicus (Rat).